The chain runs to 640 residues: 1,4-alpha-glucan branching enzyme GlgB (640 aa).

Catalysis depends on Asp-318, which acts as the Nucleophile. Glu-371 functions as the Proton donor in the catalytic mechanism.

Belongs to the glycosyl hydrolase 13 family. GlgB subfamily. As to quaternary structure, monomer.

The catalysed reaction is Transfers a segment of a (1-&gt;4)-alpha-D-glucan chain to a primary hydroxy group in a similar glucan chain.. It participates in glycan biosynthesis; glycogen biosynthesis. Catalyzes the formation of the alpha-1,6-glucosidic linkages in glycogen by scission of a 1,4-alpha-linked oligosaccharide from growing alpha-1,4-glucan chains and the subsequent attachment of the oligosaccharide to the alpha-1,6 position. The chain is 1,4-alpha-glucan branching enzyme GlgB from Francisella philomiragia subsp. philomiragia (strain ATCC 25017 / CCUG 19701 / FSC 153 / O#319-036).